Here is a 483-residue protein sequence, read N- to C-terminus: MVRTDDQPYVPTPIDRLFSHSYVRTQLAFQLDDVSGCATLLRRGMERLIRTSPFLSRELTIHMNDDQTESITTKPISPQELDRMLKIKHHEKPLRQALIEASNDRDCLDDKFMPTSFHRLDVSQPCPVMVVQANIHPDGVLLAVATNHMVMDATGQGIAVQCLADCCRLEQGDVVSLPTCSADQDRGRELLLHELPARIVNREFSEYRPCRDLYSQSAALADLAHKAATTIRVAHFTIAAEHVHALKTRCNEMLSQVFESNGHVFGADDAPWISSSDVVIALIWRSINCARYQALTTTQQPPEKQAKKDSGEVVHVGIPVNVRSRVSPVLPGSYMGNGAILVLVPQPLRTFSGTDWMSTICRVGLAVRTRLAAITSDEIRSLLHYILNAPDPIAFSFDVADYFVSNWRQMGFYEADFGSKMGKPQRIRNPDGVVGGTVFIMPKRSQPENAPWELQVSLTDEMLRLLDQDDVWATYVRPDTYWP.

This sequence belongs to the fumigaclavine B O-acetyltransferase family. As to quaternary structure, monomer.

Its pathway is secondary metabolite biosynthesis. In terms of biological role, O-acetyltransferase; part of the gene cluster that mediates the biosynthesis of protubonine B, a hydroxylated and diacetylated cyclo-L-Trp-L-Leu derivative. Within the pathway, pboB catalyzes the acetylation of protubonine C at N-1 of the indoline ring to produce protubonine B. The first step of the protubonine B synthesis is performed by the nonribosomal peptide synthetase pboA that catalyzes the formation of cyclo-L-Trp-L-Leu by condensing L-Leu with L-Trp. The flavin-dependent monooxygenase pboD is responsible for hydroxylation at C-3 of the indole ring and subsequent formation of the pyrrolidine ring, leadind to protubonine D. Protubonine D is further diacetylated by two acetyltransferases, pboB and pboC, to form the final product protubonine B via protubonine C. This Aspergillus ustus protein is O-acetyltransferase pboB.